The chain runs to 168 residues: Peptide methionine sulfoxide reductase 2 (168 aa).

Positions 40 to 168 (DVKWNDALTP…NSASLNLKKD (129 aa)) constitute a MsrB domain. 4 residues coordinate Zn(2+): Cys-79, Cys-82, Cys-128, and Cys-131. Cys-97 and Cys-157 form a disulfide bridge. Cys-157 functions as the Nucleophile in the catalytic mechanism.

Belongs to the MsrB Met sulfoxide reductase family. Requires Zn(2+) as cofactor.

The enzyme catalyses L-methionyl-[protein] + [thioredoxin]-disulfide + H2O = L-methionyl-(R)-S-oxide-[protein] + [thioredoxin]-dithiol. Functionally, methionine-R-sulfoxide reductase which catalyzes the reduction of methionine sulfoxide (MetSO) to methionine in proteins. Plays a protective role against oxidative stress by restoring activity to proteins that have been inactivated by methionine oxidation. Protects iron-sulfur clusters from oxidative inactivation along with MXR1. Involved in the regulation of lifespan. This chain is Peptide methionine sulfoxide reductase 2 (MXR2), found in Saccharomyces cerevisiae (strain ATCC 204508 / S288c) (Baker's yeast).